We begin with the raw amino-acid sequence, 351 residues long: DNA polymerase IV (351 aa).

One can recognise a UmuC domain in the interval 4-185; that stretch reads IIHVDMDCFF…LPLGKIPGVG (182 aa). Positions 8 and 103 each coordinate Mg(2+). E104 is a catalytic residue.

Belongs to the DNA polymerase type-Y family. Monomer. The cofactor is Mg(2+).

The protein localises to the cytoplasm. The enzyme catalyses DNA(n) + a 2'-deoxyribonucleoside 5'-triphosphate = DNA(n+1) + diphosphate. Poorly processive, error-prone DNA polymerase involved in untargeted mutagenesis. Copies undamaged DNA at stalled replication forks, which arise in vivo from mismatched or misaligned primer ends. These misaligned primers can be extended by PolIV. Exhibits no 3'-5' exonuclease (proofreading) activity. May be involved in translesional synthesis, in conjunction with the beta clamp from PolIII. The sequence is that of DNA polymerase IV from Cronobacter sakazakii (strain ATCC BAA-894) (Enterobacter sakazakii).